Consider the following 352-residue polypeptide: Nicotinate-nucleotide--dimethylbenzimidazole phosphoribosyltransferase (352 aa).

Glutamate 316 acts as the Proton acceptor in catalysis.

The protein belongs to the CobT family.

It carries out the reaction 5,6-dimethylbenzimidazole + nicotinate beta-D-ribonucleotide = alpha-ribazole 5'-phosphate + nicotinate + H(+). Its pathway is nucleoside biosynthesis; alpha-ribazole biosynthesis; alpha-ribazole from 5,6-dimethylbenzimidazole: step 1/2. Catalyzes the synthesis of alpha-ribazole-5'-phosphate from nicotinate mononucleotide (NAMN) and 5,6-dimethylbenzimidazole (DMB). In Ruminiclostridium cellulolyticum (strain ATCC 35319 / DSM 5812 / JCM 6584 / H10) (Clostridium cellulolyticum), this protein is Nicotinate-nucleotide--dimethylbenzimidazole phosphoribosyltransferase.